We begin with the raw amino-acid sequence, 61 residues long: Conotoxin 3 (61 aa).

The first 21 residues, 1 to 21, serve as a signal peptide directing secretion; it reads MRCLPVFVILLLLIASVPSDA. The propeptide occupies 22 to 48; it reads VQLKTKDDMPLPSFNGNARRTPRMLSN. Trp-58 bears the 6'-bromotryptophan mark.

This sequence belongs to the conotoxin T superfamily. Post-translationally, contains 2 disulfide bonds that can be either 'C1-C3, C2-C4' or 'C1-C4, C2-C3', since these disulfide connectivities have been observed for conotoxins with cysteine framework V (for examples, see AC P0DQQ7 and AC P81755). Contains 2 disulfide bonds. Expressed by the venom duct.

The protein resides in the secreted. This is Conotoxin 3 from Conus textile (Cloth-of-gold cone).